The following is a 196-amino-acid chain: Molybdenum cofactor guanylyltransferase (196 aa).

Residues Leu-10 to Gly-12, Lys-23, Asn-51, Asp-69, and Asp-99 contribute to the GTP site. Asp-99 lines the Mg(2+) pocket.

It belongs to the MobA family. As to quaternary structure, monomer. Requires Mg(2+) as cofactor.

The protein localises to the cytoplasm. It catalyses the reaction Mo-molybdopterin + GTP + H(+) = Mo-molybdopterin guanine dinucleotide + diphosphate. Functionally, transfers a GMP moiety from GTP to Mo-molybdopterin (Mo-MPT) cofactor (Moco or molybdenum cofactor) to form Mo-molybdopterin guanine dinucleotide (Mo-MGD) cofactor. The polypeptide is Molybdenum cofactor guanylyltransferase (Shewanella baltica (strain OS185)).